Reading from the N-terminus, the 364-residue chain is Putative serine/threonine-protein phosphatase C06A1.3 (364 aa).

A disordered region spans residues 1 to 24 (MSTDGNNNKKGSKEGPKSSEISKF). Basic and acidic residues predominate over residues 11–24 (GSKEGPKSSEISKF). Residues D93, H95, D121, and N153 each coordinate Mn(2+). H154 functions as the Proton donor in the catalytic mechanism. H202 and H277 together coordinate Mn(2+).

The protein belongs to the PPP phosphatase family. PP-1 subfamily. Mn(2+) is required as a cofactor.

The catalysed reaction is O-phospho-L-seryl-[protein] + H2O = L-seryl-[protein] + phosphate. It catalyses the reaction O-phospho-L-threonyl-[protein] + H2O = L-threonyl-[protein] + phosphate. This is Putative serine/threonine-protein phosphatase C06A1.3 from Caenorhabditis elegans.